A 73-amino-acid polypeptide reads, in one-letter code: U-scoloptoxin(15)-Sm2a (73 aa).

The first 20 residues, 1 to 20 (MKFYIVFCLFVVLLINFAAA), serve as a signal peptide directing secretion. 2 disulfide bridges follow: Cys-39–Cys-66 and Cys-43–Cys-68.

It belongs to the scoloptoxin-15 family. In terms of tissue distribution, expressed by the venom gland.

The protein localises to the secreted. Its function is as follows. Activity unknown, even that a lot of targets (Kv, Nav, Cav) have been tested and activities on insects and mice have been tested. This Scolopendra morsitans (Tanzanian blue ringleg centipede) protein is U-scoloptoxin(15)-Sm2a.